A 288-amino-acid chain; its full sequence is Polyamine aminopropyltransferase (288 aa).

The PABS domain maps to 9-238; sequence ETLHDQFGQY…GIMTFAWATD (230 aa). An S-methyl-5'-thioadenosine-binding site is contributed by Q33. 2 residues coordinate spermidine: H64 and D88. S-methyl-5'-thioadenosine contacts are provided by residues E108 and 140–141; that span reads DG. Catalysis depends on D158, which acts as the Proton acceptor. 158 to 161 serves as a coordination point for spermidine; that stretch reads DCTD. S-methyl-5'-thioadenosine is bound at residue P165.

The protein belongs to the spermidine/spermine synthase family. Homodimer or homotetramer.

Its subcellular location is the cytoplasm. It carries out the reaction S-adenosyl 3-(methylsulfanyl)propylamine + putrescine = S-methyl-5'-thioadenosine + spermidine + H(+). It functions in the pathway amine and polyamine biosynthesis; spermidine biosynthesis; spermidine from putrescine: step 1/1. Its function is as follows. Catalyzes the irreversible transfer of a propylamine group from the amino donor S-adenosylmethioninamine (decarboxy-AdoMet) to putrescine (1,4-diaminobutane) to yield spermidine. The protein is Polyamine aminopropyltransferase of Shigella boydii serotype 18 (strain CDC 3083-94 / BS512).